The following is a 527-amino-acid chain: MTAELREAMALAPWGPVKVKKEEEEEENFPGQASSQQVHSENIKVWAPVQGLQTGLDGSEEEEKGQNISWDMAVVLKATQEAPAASTLGSYSLPGTLAKSEILETHGTMNFLGAETKNLQLLVPKTEICEEAEKPLIISERIQKADPQGPELGEACEKGNMLKRQRIKREKKDFRQVIVNDCHLPESFKEEENQKCKKSGGKYSLNSGAVKNPKTQLGQKPFTCSVCGKGFSQSANLVVHQRIHTGEKPFECHECGKAFIQSANLVVHQRIHTGQKPYVCSKCGKAFTQSSNLTVHQKIHSLEKTFKCNECEKAFSYSSQLARHQKVHITEKCYECNECGKTFTRSSNLIVHQRIHTGEKPFACNDCGKAFTQSANLIVHQRSHTGEKPYECKECGKAFSCFSHLIVHQRIHTAEKPYDCSECGKAFSQLSCLIVHQRIHSGDLPYVCNECGKAFTCSSYLLIHQRIHNGEKPYTCNECGKAFRQRSSLTVHQRTHTGEKPYECEKCGAAFISNSHLMRHHRTHLVE.

Residues 9 to 221 (MALAPWGPVK…NPKTQLGQKP (213 aa)) form a globular domain region. The tract at residues 16–38 (PVKVKKEEEEEENFPGQASSQQV) is disordered. Glycyl lysine isopeptide (Lys-Gly) (interchain with G-Cter in SUMO2) cross-links involve residues Lys20, Lys21, Lys99, Lys117, Lys125, Lys144, Lys158, Lys189, and Lys214. 2 C2H2-type zinc fingers span residues 222–244 (FTCS…QRIH) and 250–272 (FECH…QRIH). Residue Lys276 forms a Glycyl lysine isopeptide (Lys-Gly) (interchain with G-Cter in SUMO2) linkage. 9 C2H2-type zinc fingers span residues 278–300 (YVCS…QKIH), 306–328 (FKCN…QKVH), 334–356 (YECN…QRIH), 362–384 (FACN…QRSH), 390–412 (YECK…QRIH), 418–440 (YDCS…QRIH), 446–468 (YVCN…QRIH), 474–496 (YTCN…QRTH), and 502–524 (YECE…HRTH).

The protein belongs to the krueppel C2H2-type zinc-finger protein family.

The protein localises to the nucleus. May be involved in transcriptional regulation. Involved in cell differentiation and/or proliferation. This chain is Zinc finger protein 35 (ZNF35), found in Homo sapiens (Human).